Consider the following 35-residue polypeptide: N-acylglucosamine 2-epimerase (35 aa).

The tract at residues 1-21 is leucine-zipper; sequence LNLVDQLGEADEELAGTYAEL.

It belongs to the N-acylglucosamine 2-epimerase family. In terms of assembly, homodimer. Forms a heterodimer with renin and inhibits its activity.

It catalyses the reaction an N-acyl-D-glucosamine = an N-acyl-D-mannosamine. Its pathway is amino-sugar metabolism; N-acetylneuraminate degradation. Catalyzes the interconversion of N-acetylglucosamine to N-acetylmannosamine. Involved in the N-glycolylneuraminic acid (Neu5Gc) degradation pathway. The protein is N-acylglucosamine 2-epimerase of Canis lupus familiaris (Dog).